A 406-amino-acid polypeptide reads, in one-letter code: Tyrosine-protein phosphatase non-receptor type 2 (406 aa).

Positions 5–275 constitute a Tyrosine-protein phosphatase domain; it reads IEREFEELDA…RFSYMAIIEG (271 aa). At Y22 the chain carries Phosphotyrosine. Phosphoserine is present on S52. Y68 is subject to Phosphotyrosine. Residues D182, 216 to 222, and Q260 contribute to the substrate site; that span reads CSAGIGR. C216 functions as the Phosphocysteine intermediate in the catalytic mechanism. C216 carries the post-translational modification S-nitrosocysteine. Phosphoserine is present on residues S293, S298, S304, S320, and S339. The interval 341-406 is endoplasmic reticulum location; sequence ESILRKRIRE…ALVGWTLLFH (66 aa). The interval 371-406 is mediates interaction with STX17; sequence ERKRKRWLYWQPILTKMGFVSVILVGALVGWTLLFH.

It belongs to the protein-tyrosine phosphatase family. Non-receptor class 1 subfamily. In terms of assembly, interacts with RMDN3. Isoform 1 interacts with TMED9. Isoform 1 interacts with STX17; dephosphorylates STX17. Interacts with ITGA1 (via cytoplasmic domain); activates the phosphatase activity towards EGFR. Interacts with TRAF2; probably involved in tumor necrosis factor-mediated signaling. Interacts with MET. Interacts with FAM220A and STAT3; interaction with FAM220A promotes interaction of PTPN2 with transcriptional activator STAT3, leading to dephosphorylation of STAT3 by PTPN2 and negative regulation of STAT3 transcriptional activator activity. Specifically phosphorylated in a cell cycle-dependent manner by cyclin-dependent kinases CDK1 and CDK2. Probably activated through phosphorylation by PKR. Ubiquitously expressed. The highest expression levels were found in ovary, testis, thymus and kidney.

The protein localises to the endoplasmic reticulum. It localises to the endoplasmic reticulum-Golgi intermediate compartment. The protein resides in the nucleus. Its subcellular location is the cytoplasm. It is found in the cell membrane. It catalyses the reaction O-phospho-L-tyrosyl-[protein] + H2O = L-tyrosyl-[protein] + phosphate. Its function is as follows. Non-receptor type tyrosine-specific phosphatase that dephosphorylates receptor protein tyrosine kinases including INSR, EGFR, CSF1R, PDGFR. Also dephosphorylates non-receptor protein tyrosine kinases like JAK1, JAK2, JAK3, Src family kinases, STAT1, STAT3 and STAT6 either in the nucleus or the cytoplasm. Negatively regulates numerous signaling pathways and biological processes like hematopoiesis, inflammatory response, cell proliferation and differentiation, and glucose homeostasis. Plays a multifaceted and important role in the development of the immune system. Functions in T-cell receptor signaling through dephosphorylation of FYN and LCK to control T-cells differentiation and activation. Dephosphorylates CSF1R, negatively regulating its downstream signaling and macrophage differentiation. Negatively regulates cytokine (IL2/interleukin-2 and interferon)-mediated signaling through dephosphorylation of the cytoplasmic kinases JAK1, JAK3 and their substrate STAT1, that propagate signaling downstream of the cytokine receptors. Also regulates the IL6/interleukin-6 and IL4/interleukin-4 cytokine signaling through dephosphorylation of STAT3 and STAT6 respectively. In addition to the immune system, it is involved in anchorage-dependent, negative regulation of EGF-stimulated cell growth. Activated by the integrin ITGA1/ITGB1, it dephosphorylates EGFR and negatively regulates EGF signaling. Dephosphorylates PDGFRB and negatively regulates platelet-derived growth factor receptor-beta signaling pathway and therefore cell proliferation. Negatively regulates tumor necrosis factor-mediated signaling downstream via MAPK through SRC dephosphorylation. May also regulate the hepatocyte growth factor receptor signaling pathway through dephosphorylation of the hepatocyte growth factor receptor MET. Also plays an important role in glucose homeostasis. For instance, negatively regulates the insulin receptor signaling pathway through the dephosphorylation of INSR and control gluconeogenesis and liver glucose production through negative regulation of the IL6 signaling pathways. May also bind DNA. The protein is Tyrosine-protein phosphatase non-receptor type 2 (Ptpn2) of Mus musculus (Mouse).